The sequence spans 148 residues: Arginine repressor (148 aa).

Belongs to the ArgR family.

The protein resides in the cytoplasm. It participates in amino-acid biosynthesis; L-arginine biosynthesis [regulation]. Its function is as follows. Regulates arginine biosynthesis genes. The protein is Arginine repressor of Chlorobium limicola (strain DSM 245 / NBRC 103803 / 6330).